A 364-amino-acid chain; its full sequence is MQIRRLALHQLRRFNAVELSPQPGLNLLTGDNGAGKTSILEALHLMAYGRSFRGRVRDGLVRQGQEALEIFVEWDEQRASHPPHRRKAGLRHSGQDWKGRLDGEDVAQLGNLCAALAVVTFEPGSHALVSGGGEPRRRFLDWGLFHVEPDFLSLWRRYSRALKQRNALLKQGGPSRMLDTWDHELAEAGEPLTSRRQHYLERLQQRTVALAAELAPQLGIQAMELSPGWRRHELPLADALLLARERDRQAGYTSVGPHRADWSVDFHNIPGRDALSRGQAKLTALACLLAQAEDYAEQRGEWPVIALDDLASELDRTHQARVLERLLGGPAQIFVTATETPAALQELTHIARFHVEHAQIVAVP.

An ATP-binding site is contributed by 30–37 (GDNGAGKT).

This sequence belongs to the RecF family.

Its subcellular location is the cytoplasm. The RecF protein is involved in DNA metabolism; it is required for DNA replication and normal SOS inducibility. RecF binds preferentially to single-stranded, linear DNA. It also seems to bind ATP. This chain is DNA replication and repair protein RecF, found in Stenotrophomonas maltophilia (strain R551-3).